The following is a 694-amino-acid chain: Outer dynein arm-docking complex subunit 1 (694 aa).

2 coiled-coil regions span residues E27–N192 and R222–Q259. The tract at residues R271 to E290 is disordered. Residues N339–L418 adopt a coiled-coil conformation. 2 disordered regions span residues Q531 to S550 and S571 to N694. 4 positions are modified to phosphoserine: S536, S542, S543, and S545. Residues T628 to T642 show a composition bias toward low complexity. Positions S655–Q672 are enriched in polar residues. Low complexity predominate over residues T673–S687.

It belongs to the ODA1/DCC2 family. In terms of assembly, component of the outer dynein arm-docking complex along with ODAD2, ODAD3, ODAD4 and CLXN. Interacts with ODAD3. Interacts with ODAD4; this interaction may facilitate the recruitment and/or attachment of outer dynein arm docking complex proteins,including ODAD1, ODAD3, and ODAD4 to ciliary axonemes. Interacts with DNAH9. Interacts with MNS1. Interacts with PIERCE1 and PIERCE2; the interactions link the outer dynein arms docking complex (ODA-DC) to the internal microtubule inner proteins (MIP) in cilium axoneme.

It localises to the cytoplasm. The protein resides in the cytoskeleton. The protein localises to the cilium axoneme. Functionally, component of the outer dynein arm-docking complex that mediates outer dynein arms (ODA) binding onto the doublet microtubule. Involved in mediating assembly of both ODAs and their axonemal docking complex onto ciliary microtubules. This Rattus norvegicus (Rat) protein is Outer dynein arm-docking complex subunit 1 (Odad1).